A 213-amino-acid polypeptide reads, in one-letter code: Histone H1.2 (213 aa).

Residues 1–17 (MSETAPAAPAAAPPAEK) show a composition bias toward low complexity. The tract at residues 1–41 (MSETAPAAPAAAPPAEKTPVKKKAAKKPAGARRKASGPPVS) is disordered. N-acetylserine; partial is present on Ser-2. Residue Ser-2 is modified to Phosphoserine. Lys-17 carries the N6-acetyllysine modification. Residues 20-35 (VKKKAAKKPAGARRKA) are compositionally biased toward basic residues. 3 positions are modified to N6-(2-hydroxyisobutyryl)lysine: Lys-23, Lys-26, and Lys-27. Lys-34 bears the N6-(beta-hydroxybutyryl)lysine; alternate mark. Lys-34 carries the post-translational modification N6-crotonyllysine; alternate. An N6-methyllysine; alternate modification is found at Lys-34. Residues 36–109 (SGPPVSELIT…GASGSFKLNK (74 aa)) form the H15 domain. Lys-46 is modified (N6-(2-hydroxyisobutyryl)lysine). At Lys-52 the chain carries N6-(beta-hydroxybutyryl)lysine; alternate. Position 52 is an N6-(2-hydroxyisobutyryl)lysine; alternate (Lys-52). At Arg-54 the chain carries Citrulline. Lys-63 is modified (N6-(2-hydroxyisobutyryl)lysine). N6-(beta-hydroxybutyryl)lysine; alternate is present on Lys-64. N6-crotonyllysine; alternate is present on Lys-64. N6-(2-hydroxyisobutyryl)lysine; alternate is present on Lys-64. N6-(2-hydroxyisobutyryl)lysine occurs at positions 75 and 81. Residues Lys-85 and Lys-90 each carry the N6-(beta-hydroxybutyryl)lysine; alternate modification. An N6-crotonyllysine; alternate mark is found at Lys-85, Lys-90, and Lys-97. An N6-(2-hydroxyisobutyryl)lysine; alternate mark is found at Lys-85, Lys-90, and Lys-97. The tract at residues 95–213 (QTKGTGASGS…KPKKAAPKKK (119 aa)) is disordered. Position 97 is an N6-succinyllysine; alternate (Lys-97). Ser-104 carries the phosphoserine; by PKC modification. Lys-106 is subject to N6-(beta-hydroxybutyryl)lysine. N6-(2-hydroxyisobutyryl)lysine is present on residues Lys-110, Lys-117, Lys-121, Lys-129, and Lys-136. Over residues 119–140 (KAKKAGAAKPKKAAGAAKKTKK) the composition is skewed to basic residues. The residue at position 146 (Thr-146) is a Phosphothreonine. Lys-148 bears the N6-(2-hydroxyisobutyryl)lysine mark. Residues 149–160 (KTAKKTPKKAKK) show a composition bias toward basic residues. N6-crotonyllysine; alternate is present on residues Lys-159 and Lys-168. 2 positions are modified to N6-(2-hydroxyisobutyryl)lysine; alternate: Lys-159 and Lys-168. Residues 169 to 186 (KVAKSPKKAKAAKPKKAA) are compositionally biased toward basic residues. At Lys-187 the chain carries N6-methyllysine; by EHMT1 and EHMT2. Ser-188 is modified (ADP-ribosylserine). Basic residues predominate over residues 193-213 (VKPKAAKPKVAKPKKAAPKKK).

The protein belongs to the histone H1/H5 family. H1 histones are progressively phosphorylated during the cell cycle, becoming maximally phosphorylated during late G2 phase and M phase, and being dephosphorylated sharply thereafter. In terms of processing, crotonylation (Kcr) is specifically present in male germ cells and marks testis-specific genes in post-meiotic cells, including X-linked genes that escape sex chromosome inactivation in haploid cells. Crotonylation marks active promoters and enhancers and confers resistance to transcriptional repressors. It is also associated with post-meiotically activated genes on autosomes. Post-translationally, ADP-ribosylated on Ser-188 in response to DNA damage. Citrullination at Arg-54 (H1R54ci) by PADI4 takes place within the DNA-binding site of H1 and results in its displacement from chromatin and global chromatin decondensation, thereby promoting pluripotency and stem cell maintenance.

It is found in the nucleus. The protein localises to the chromosome. Histone H1 protein binds to linker DNA between nucleosomes forming the macromolecular structure known as the chromatin fiber. Histones H1 are necessary for the condensation of nucleosome chains into higher-order structured fibers. Also acts as a regulator of individual gene transcription through chromatin remodeling, nucleosome spacing and DNA methylation. In Bos taurus (Bovine), this protein is Histone H1.2.